The sequence spans 308 residues: Homoserine O-acetyltransferase (308 aa).

Cysteine 142 serves as the catalytic Acyl-thioester intermediate. Substrate-binding residues include lysine 163 and serine 192. Residue histidine 235 is the Proton acceptor of the active site. Glutamate 237 is an active-site residue. Residue arginine 249 coordinates substrate.

Belongs to the MetA family.

It localises to the cytoplasm. It carries out the reaction L-homoserine + acetyl-CoA = O-acetyl-L-homoserine + CoA. It functions in the pathway amino-acid biosynthesis; L-methionine biosynthesis via de novo pathway; O-acetyl-L-homoserine from L-homoserine: step 1/1. Functionally, transfers an acetyl group from acetyl-CoA to L-homoserine, forming acetyl-L-homoserine. The chain is Homoserine O-acetyltransferase from Rhizobium rhizogenes (strain K84 / ATCC BAA-868) (Agrobacterium radiobacter).